A 62-amino-acid chain; its full sequence is UPF0434 protein NGR_c31900 (62 aa).

The protein belongs to the UPF0434 family.

The chain is UPF0434 protein NGR_c31900 from Sinorhizobium fredii (strain NBRC 101917 / NGR234).